Here is a 530-residue protein sequence, read N- to C-terminus: UDP-glucuronosyltransferase 1A10 (530 aa).

Residues 1 to 25 form the signal peptide; the sequence is MARAGWTSPVPLCVCLLLTCGFAEA. N-linked (GlcNAc...) asparagine glycans are attached at residues asparagine 71, asparagine 292, and asparagine 344. The helical transmembrane segment at 488-504 threads the bilayer; the sequence is VIGFLLAVVLTVAFITF.

The protein belongs to the UDP-glycosyltransferase family. As to quaternary structure, homodimer. Homooligomer. Interacts with UGT1A1, UGT1A3, UGT1A4, UGT1A6, UGT1A7, UGT1A8 and UGT1A9 to form heterodimers. Isoform 1 interacts with isoform 2/i2 suggesting that oligomerization is involved in negative regulation of transferase activity by isoform 2. Isoform 1 also interacts with respective i2 isoforms of UGT1A1, UGT1A3, UGT1A4, UGT1A6, UGT1A7, UGT1A8 and UGT1A9. Liver and colon. Isoform 1 and isoform 2 are expressed in colon, esophagus and small intestine; isoform 2 but not isoform 1 is expressed in liver or kidney.

Its subcellular location is the endoplasmic reticulum membrane. It carries out the reaction glucuronate acceptor + UDP-alpha-D-glucuronate = acceptor beta-D-glucuronoside + UDP + H(+). The enzyme catalyses 17beta-estradiol + UDP-alpha-D-glucuronate = 17beta-estradiol 3-O-(beta-D-glucuronate) + UDP + H(+). It catalyses the reaction 17beta-estradiol + UDP-alpha-D-glucuronate = 17beta-estradiol 17-O-(beta-D-glucuronate) + UDP + H(+). The catalysed reaction is 17alpha-estradiol + UDP-alpha-D-glucuronate = 17alpha-estradiol 3-O-(beta-D-glucuronate) + UDP + H(+). It carries out the reaction 16alpha,17beta-estriol + UDP-alpha-D-glucuronate = 16alpha,17beta-estriol 3-O-(beta-D-glucuronate) + UDP + H(+). The enzyme catalyses 16beta,17beta-estriol + UDP-alpha-D-glucuronate = 16beta,17beta-estriol 3-O-(beta-D-glucuronate) + UDP + H(+). It catalyses the reaction 16alpha,17alpha-estriol + UDP-alpha-D-glucuronate = 16alpha,17alpha-estriol 3-O-(beta-D-glucuronate) + UDP + H(+). The catalysed reaction is 16alpha-hydroxyestrone + UDP-alpha-D-glucuronate = 16alpha-hydroxyestrone 3-O-(beta-D-glucuronate) + UDP + H(+). It carries out the reaction estrone + UDP-alpha-D-glucuronate = estrone 3-O-(beta-D-glucuronate) + UDP + H(+). The enzyme catalyses prunetin + UDP-alpha-D-glucuronate = prunetin-4'-O-beta-D-glucuronide + UDP. It catalyses the reaction (5Z,8Z,11Z,14Z)-eicosatetraenoate + UDP-alpha-D-glucuronate = O-[(5Z),(8Z),(11Z),(14Z)-eicosatetraenoyl]-beta-D-glucuronate + UDP. The catalysed reaction is 15-hydroxy-(5Z,8Z,11Z,13E)-eicosatetraenoate + UDP-alpha-D-glucuronate = 15-O-(beta-D-glucuronosyl)-(5Z,8Z,11Z,14Z)-eicosatetraenoate + UDP + H(+). It carries out the reaction prostaglandin B1 + UDP-alpha-D-glucuronate = 15-O-(beta-D-glucuronosyl)-prostaglandin B1 + UDP + H(+). The enzyme catalyses (E)-ferulate + UDP-alpha-D-glucuronate = (E)-4-O-(beta-D-glucuronosyl)-ferulate + UDP + H(+). It catalyses the reaction (E)-ferulate + UDP-alpha-D-glucuronate = (E)-ferulic acid beta-D-glucuronate ester + UDP. The catalysed reaction is losartan + UDP-alpha-D-glucuronate = losartan-2-N-beta-D-glucuronide + UDP. It carries out the reaction candesartan + UDP-alpha-D-glucuronate = candesartan O-beta-D-glucuronoside + UDP. The enzyme catalyses candesartan + UDP-alpha-D-glucuronate = candesartan-2-N-beta-D-glucuronide + UDP. It catalyses the reaction zolasartan + UDP-alpha-D-glucuronate = zolarsartan-1-N-beta-D-glucuronide + UDP. In terms of biological role, UDP-glucuronosyltransferase (UGT) that catalyzes phase II biotransformation reactions in which lipophilic substrates are conjugated with glucuronic acid to increase the metabolite's water solubility, thereby facilitating excretion into either the urine or bile. Essential for the elimination and detoxification of drugs, xenobiotics and endogenous compounds. Catalyzes the glucuronidation of endogenous estrogen hormones such as estradiol, estrone and estriol. Involved in the glucuronidation of arachidonic acid (AA) and AA-derived eicosanoids including 15-HETE and PGB1. Involved in the glucuronidation of the phytochemical ferulic acid at the phenolic or the carboxylic acid group. Also catalyzes the glucuronidation of the isoflavones genistein, daidzein, glycitein, formononetin, biochanin A and prunetin, which are phytoestrogens with anticancer and cardiovascular properties. Involved in the glucuronidation of the AGTR1 angiotensin receptor antagonist losartan, caderastan and zolarsatan, drugs which can inhibit the effect of angiotensin II. Its function is as follows. Lacks UGT glucuronidation activity but acts as a negative regulator of isoform 1. This is UDP-glucuronosyltransferase 1A10 from Homo sapiens (Human).